Consider the following 591-residue polypeptide: Aspartate--tRNA(Asp/Asn) ligase (591 aa).

E176 contacts L-aspartate. Positions 200 to 203 are aspartate; the sequence is QLFK. Residue R222 coordinates L-aspartate. ATP is bound by residues 222–224 and Q231; that span reads RDE. L-aspartate is bound at residue H450. E484 is an ATP binding site. Residue R491 participates in L-aspartate binding. 536–539 lines the ATP pocket; the sequence is GLDR.

This sequence belongs to the class-II aminoacyl-tRNA synthetase family. Type 1 subfamily. In terms of assembly, homodimer.

The protein localises to the cytoplasm. The catalysed reaction is tRNA(Asx) + L-aspartate + ATP = L-aspartyl-tRNA(Asx) + AMP + diphosphate. Functionally, aspartyl-tRNA synthetase with relaxed tRNA specificity since it is able to aspartylate not only its cognate tRNA(Asp) but also tRNA(Asn). Reaction proceeds in two steps: L-aspartate is first activated by ATP to form Asp-AMP and then transferred to the acceptor end of tRNA(Asp/Asn). This chain is Aspartate--tRNA(Asp/Asn) ligase, found in Bacillus thuringiensis (strain Al Hakam).